The following is a 147-amino-acid chain: Hemoglobin subunit gamma (147 aa).

A Globin domain is found at 3–147 (HFTAEEKAAI…VANALAYKYH (145 aa)). The heme b site is built by H64 and H93.

It belongs to the globin family. Heterotetramer of two alpha chains and two gamma chains in fetal hemoglobin (Hb F). Red blood cells.

Functionally, gamma chains make up the fetal hemoglobin F, in combination with alpha chains. The sequence is that of Hemoglobin subunit gamma (HBG) from Elephas maximus (Indian elephant).